Reading from the N-terminus, the 506-residue chain is GMP synthase [glutamine-hydrolyzing] (506 aa).

One can recognise a Glutamine amidotransferase type-1 domain in the interval 4-192; the sequence is KLIILDFGSQ…FLDICGMKRD (189 aa). Cys-79 serves as the catalytic Nucleophile. Active-site residues include His-167 and Glu-169. A GMPS ATP-PPase domain is found at 193 to 381; that stretch reads WTPASFIEAT…LGMMPHLIHR (189 aa). 220–226 serves as a coordination point for ATP; it reads SGGVDSS.

Homodimer.

It carries out the reaction XMP + L-glutamine + ATP + H2O = GMP + L-glutamate + AMP + diphosphate + 2 H(+). It functions in the pathway purine metabolism; GMP biosynthesis; GMP from XMP (L-Gln route): step 1/1. In terms of biological role, catalyzes the synthesis of GMP from XMP. This chain is GMP synthase [glutamine-hydrolyzing], found in Porphyromonas gingivalis (strain ATCC 33277 / DSM 20709 / CIP 103683 / JCM 12257 / NCTC 11834 / 2561).